Reading from the N-terminus, the 303-residue chain is Mycothiol acetyltransferase (303 aa).

N-acetyltransferase domains follow at residues 6–134 and 154–303; these read TSLA…VEGD and NEAY…QSSS. Glutamate 37 serves as a coordination point for 1D-myo-inositol 2-(L-cysteinylamino)-2-deoxy-alpha-D-glucopyranoside. Acetyl-CoA-binding positions include 75–77 and 83–88; these read VVV and RQGYGS. 1D-myo-inositol 2-(L-cysteinylamino)-2-deoxy-alpha-D-glucopyranoside is bound by residues glutamate 180, lysine 221, and glutamate 233. Acetyl-CoA is bound by residues 237–239 and 244–250; these read VGL and RRRGLGD. A 1D-myo-inositol 2-(L-cysteinylamino)-2-deoxy-alpha-D-glucopyranoside-binding site is contributed by tyrosine 271. 276-281 is an acetyl-CoA binding site; sequence NESARR.

It belongs to the acetyltransferase family. MshD subfamily. As to quaternary structure, monomer.

The catalysed reaction is 1D-myo-inositol 2-(L-cysteinylamino)-2-deoxy-alpha-D-glucopyranoside + acetyl-CoA = mycothiol + CoA + H(+). Functionally, catalyzes the transfer of acetyl from acetyl-CoA to desacetylmycothiol (Cys-GlcN-Ins) to form mycothiol. The chain is Mycothiol acetyltransferase from Corynebacterium diphtheriae (strain ATCC 700971 / NCTC 13129 / Biotype gravis).